The following is a 181-amino-acid chain: Cytochrome c-type biogenesis protein CcmE (181 aa).

Over 1 to 8 (MNPRRKSR) the chain is Cytoplasmic. Residues 9 to 29 (LKVVVSIIFGVAVAAGLTLYA) form a helical; Signal-anchor for type II membrane protein membrane-spanning segment. Residues 30 to 181 (LSQNIDLFYT…TLKTLQGEAN (152 aa)) lie on the Periplasmic side of the membrane. 2 residues coordinate heme: histidine 131 and tyrosine 135. 2 stretches are compositionally biased toward basic and acidic residues: residues 135–148 (YMPP…KEQH) and 156–166 (ADLKGTSARDK). The disordered stretch occupies residues 135-166 (YMPPELGDKLKEQHGAAGISEADLKGTSARDK).

The protein belongs to the CcmE/CycJ family.

The protein localises to the cell inner membrane. In terms of biological role, heme chaperone required for the biogenesis of c-type cytochromes. Transiently binds heme delivered by CcmC and transfers the heme to apo-cytochromes in a process facilitated by CcmF and CcmH. The chain is Cytochrome c-type biogenesis protein CcmE from Actinobacillus pleuropneumoniae serotype 7 (strain AP76).